The primary structure comprises 161 residues: MSPQIDLVRRMVEAYNTGKTDDVAEFILHEYLNPGALEHNPELRGPEAFAAAVTWLKYAFSEEAHLEEIGYEENGPWVRAKLALYGRHVGNLVGMPATGRRFSGEQIHLIRIVDGKIRDHRDWPDYLGTYRQLGEPWPTPEGWRPCPPPPRRRHDRSTDTP.

Gln-106 contributes to the substrate binding site. Positions 137–161 are disordered; that stretch reads WPTPEGWRPCPPPPRRRHDRSTDTP.

It belongs to the polyketide cyclase DnrD family. As to quaternary structure, homotetramer.

It catalyses the reaction methyl aklanonate = aklaviketone. It functions in the pathway antibiotic biosynthesis; daunorubicin biosynthesis. The protein operates within antibiotic biosynthesis; carminomycin biosynthesis. It participates in antibiotic biosynthesis; rhodomycin biosynthesis. Its pathway is antibiotic biosynthesis; aclacinomycin biosynthesis. Involved in the biosynthesis of aklavinone which is an important precursor common to the formation of the clinically significant anthracyclines such as carminomycin, daunorubicin (daunomycin), rhodomycin, aclacinomycin T (aklavin) and aclacinomycin A (aclarubicin). These compounds are aromatic polyketide antibiotics that exhibit high cytotoxicity and are widely applied in the chemotherapy of a variety of cancers. Catalyzes the cyclization of aklanonic acid methyl ester to yield aklaviketone. This Streptomyces sp. (strain C5) protein is Aklanonic acid methyl ester cyclase DauD (dauD).